An 88-amino-acid chain; its full sequence is Small ribosomal subunit protein uS15 (88 aa).

Belongs to the universal ribosomal protein uS15 family. In terms of assembly, part of the 30S ribosomal subunit. Forms a bridge to the 50S subunit in the 70S ribosome, contacting the 23S rRNA.

Functionally, one of the primary rRNA binding proteins, it binds directly to 16S rRNA where it helps nucleate assembly of the platform of the 30S subunit by binding and bridging several RNA helices of the 16S rRNA. Its function is as follows. Forms an intersubunit bridge (bridge B4) with the 23S rRNA of the 50S subunit in the ribosome. The protein is Small ribosomal subunit protein uS15 of Methylacidiphilum infernorum (isolate V4) (Methylokorus infernorum (strain V4)).